Here is a 30-residue protein sequence, read N- to C-terminus: Hainantoxin F6-34.84 (30 aa).

2 disulfides stabilise this stretch: cysteine 2/cysteine 15 and cysteine 9/cysteine 24.

Belongs to the AVIT (prokineticin) family. Expressed by the venom gland.

The protein resides in the secreted. This chain is Hainantoxin F6-34.84, found in Cyriopagopus hainanus (Chinese bird spider).